The chain runs to 1453 residues: Leucine-rich repeat-containing protein 9 (1453 aa).

LRR repeat units lie at residues 53–78 (FPNL…CLQL), 97–119 (CRNL…LEKL), 120–141 (IKLK…LQTL), 142–164 (KNLK…LDSN), 166–188 (QLER…NLTR), 224–248 (LQRF…AMKK), and 264–287 (KEDL…RVKL). Residues 302–321 (LKGSGKGHSDGSNNSKVTDP) are disordered. LRR repeat units lie at residues 344–367 (LNAL…IYHI), 671–693 (KARP…TSVY), 694–715 (SHIV…LSKL), 716–737 (TGLR…VYHL), 739–758 (NLEY…GFRG), 759–784 (LMKL…MLCK), 786–812 (TTSL…VIGR), 886–908 (YLKI…LEKL), 909–930 (ENLK…LESC), 931–952 (INLE…ISKM), 953–975 (TKLT…TFDN), 976–1001 (MLHL…SFTL), 1023–1048 (LCNL…LFVI), 1092–1115 (FKQM…PVDQ), 1116–1138 (FRNV…LIYL), 1139–1161 (PNVK…LKPQ), 1201–1224 (MHSL…QLNR), 1225–1247 (LRNL…LDNL), 1248–1270 (VVLQ…AFAK), 1272–1292 (SSLL…KLQS), 1293–1317 (LVKL…KLDV), 1319–1345 (STLR…IFRL), and 1365–1388 (EFHL…PMDG).

The protein is Leucine-rich repeat-containing protein 9 (LRRC9) of Homo sapiens (Human).